Here is a 144-residue protein sequence, read N- to C-terminus: Large ribosomal subunit protein uL16 (144 aa).

This sequence belongs to the universal ribosomal protein uL16 family. As to quaternary structure, part of the 50S ribosomal subunit.

Binds 23S rRNA and is also seen to make contacts with the A and possibly P site tRNAs. The polypeptide is Large ribosomal subunit protein uL16 (Bacillus cereus (strain ATCC 10987 / NRS 248)).